Reading from the N-terminus, the 418-residue chain is Protease LasA (418 aa).

An N-terminal signal peptide occupies residues 1-31; the sequence is MQHKRSRALASPRSPFLFALLALAVGGTANA. A propeptide spanning residues 32–236 is cleaved from the precursor; that stretch reads HDDGLPAFRY…ARQLQAKAAL (205 aa). Residues His259 and Asp272 each coordinate Zn(2+). The cysteines at positions 301 and 347 are disulfide-linked. Active-site proton donor/acceptor residues include His317 and His356. Position 358 (His358) interacts with Zn(2+). A disulfide bond links Cys391 and Cys406.

Belongs to the peptidase M23A family. Zn(2+) serves as cofactor.

It is found in the secreted. Its function is as follows. Involved in proteolysis and elastolysis (degradation of the host protein elastin). Has staphylolytic activity (degrades pentaglycine cross-links in cell wall peptidoglycan), preferring Gly-Gly-|-X substrates where X is Ala or Gly. Enhances the elastolytic but not proteolytic activity of elastase (lasB) and elastolytic activity of other proteases. Degradation of elastin is likely to contribute to the pathogenicity of P.aeruginosa. The chain is Protease LasA (lasA) from Pseudomonas aeruginosa (strain UCBPP-PA14).